The following is a 165-amino-acid chain: Phosphopantetheine adenylyltransferase (165 aa).

A substrate-binding site is contributed by Ser-9. ATP is bound by residues 9-10 and His-17; that span reads SF. 3 residues coordinate substrate: Lys-41, Val-73, and Arg-87. ATP contacts are provided by residues 88–90, Glu-98, and 123–129; these read GLR and FTLLSSS.

This sequence belongs to the bacterial CoaD family. In terms of assembly, homohexamer. Mg(2+) is required as a cofactor.

The protein localises to the cytoplasm. It catalyses the reaction (R)-4'-phosphopantetheine + ATP + H(+) = 3'-dephospho-CoA + diphosphate. Its pathway is cofactor biosynthesis; coenzyme A biosynthesis; CoA from (R)-pantothenate: step 4/5. Its function is as follows. Reversibly transfers an adenylyl group from ATP to 4'-phosphopantetheine, yielding dephospho-CoA (dPCoA) and pyrophosphate. The sequence is that of Phosphopantetheine adenylyltransferase from Herpetosiphon aurantiacus (strain ATCC 23779 / DSM 785 / 114-95).